A 407-amino-acid polypeptide reads, in one-letter code: Pleckstrin homology-like domain family A member 1 (407 aa).

2 stretches are compositionally biased toward basic and acidic residues: residues 1 to 11 (MRRTPAAERLS) and 54 to 63 (RSAEDGREQP). The segment at 1–67 (MRRTPAAERL…DGREQPAHGS (67 aa)) is disordered. The 36-residue stretch at 149–184 (SGCKALKEGVLEKRSDGLLQLWKKKCCILTEEGLLL) folds into the PH domain. 2 disordered regions span residues 188–224 (KQVQHQQQQQQQQQPGQGTAEPSQPSGPAVTSLEPPA) and 296–407 (QQHL…SNSA). 2 stretches are compositionally biased toward low complexity: residues 189-204 (QVQHQQQQQQQQQPGQ) and 297-319 (QHLVQQQPPQTQQIQPQPQQPQI). The interval 312–348 (PQPQQPQIQPQPQPQIQPQPQPQPQPQPQPQQQPQPQ) is 15 X 2 AA repeats of P-Q. Positions 320-344 (QPQPQPQIQPQPQPQPQPQPQPQQQ) are enriched in pro residues. An 11 X 2 AA repeats of P-H region spans residues 354–381 (PHPHPHLYPHPHPHAHSHPHPHPHPHPH). A compositionally biased stretch (basic residues) spans 354–384 (PHPHPHLYPHPHPHAHSHPHPHPHPHPHQLQ). Low complexity predominate over residues 385 to 395 (HAHQPLHSQPQ).

Interacts with RPL14, EIF3S7 and PABPC4.

The protein resides in the cytoplasm. Its subcellular location is the cytoplasmic vesicle. The protein localises to the nucleus. It is found in the nucleolus. In terms of biological role, seems to be involved in regulation of apoptosis. May be involved in detachment-mediated programmed cell death. May mediate apoptosis during neuronal development. May be involved in regulation of anti-apoptotic effects of IGF1. May be involved in translational regulation. This chain is Pleckstrin homology-like domain family A member 1 (Phlda1), found in Rattus norvegicus (Rat).